The chain runs to 152 residues: Ubiquitin-conjugating enzyme E2 N (152 aa).

Positions 3–149 (GLPRRIIKET…ARAWTRLYAM (147 aa)) constitute a UBC core domain. N6-acetyllysine is present on Lys82. Catalysis depends on Cys87, which acts as the Glycyl thioester intermediate. Residue Lys92 forms a Glycyl lysine isopeptide (Lys-Gly) (interchain with G-Cter in ISG15) linkage.

The protein belongs to the ubiquitin-conjugating enzyme family. Heterodimer with UBE2V2. Interacts (UBE2V2-UBE2N heterodimer) with the E3 ligase STUB1 (via the U-box domain); the complex has a specific 'Lys-63'-linked polyubiquitination activity. Interacts with RNF8 and RNF168. Interacts with RNF11. Interacts with the E3 ligases, HLTF and SHPRH; the interactions promote the 'Lys-63'-linked polyubiquitination of PCNA upon genotoxic stress and lead to DNA repair. Interacts with ARIH2 (via RING-type 2). Interacts with OTUB1; leading to inhibit E2-conjugating activity. Interacts with GPS2; leading to inhibit E2-conjugating activity. Interacts with RIGI and RNF135; involved in RIGI ubiquitination and activation. In terms of processing, conjugation to ISG15 impairs formation of the thioester bond with ubiquitin but not interaction with UBE2V2.

The catalysed reaction is S-ubiquitinyl-[E1 ubiquitin-activating enzyme]-L-cysteine + [E2 ubiquitin-conjugating enzyme]-L-cysteine = [E1 ubiquitin-activating enzyme]-L-cysteine + S-ubiquitinyl-[E2 ubiquitin-conjugating enzyme]-L-cysteine.. It functions in the pathway protein modification; protein ubiquitination. With respect to regulation, activity is inhibited by binding to OTUB1, which prevents 'Lys-63'-linked polyubiquitination. Activity is inhibited by GPS2, leading to prevent 'Lys-63'-linked polyubiquitination. Functionally, the UBE2V1-UBE2N and UBE2V2-UBE2N heterodimers catalyze the synthesis of non-canonical 'Lys-63'-linked polyubiquitin chains. This type of polyubiquitination does not lead to protein degradation by the proteasome. Mediates transcriptional activation of target genes. Plays a role in the control of progress through the cell cycle and differentiation. Plays a role in the error-free DNA repair pathway and contributes to the survival of cells after DNA damage. Acts together with the E3 ligases, HLTF and SHPRH, in the 'Lys-63'-linked poly-ubiquitination of PCNA upon genotoxic stress, which is required for DNA repair. Appears to act together with E3 ligase RNF5 in the 'Lys-63'-linked polyubiquitination of JKAMP thereby regulating JKAMP function by decreasing its association with components of the proteasome and ERAD. Promotes TRIM5 capsid-specific restriction activity and the UBE2V1-UBE2N heterodimer acts in concert with TRIM5 to generate 'Lys-63'-linked polyubiquitin chains which activate the MAP3K7/TAK1 complex which in turn results in the induction and expression of NF-kappa-B and MAPK-responsive inflammatory genes. Together with RNF135 and UB2V1, catalyzes the viral RNA-dependent 'Lys-63'-linked polyubiquitination of RIGI to activate the downstream signaling pathway that leads to interferon beta production. UBE2V1-UBE2N together with TRAF3IP2 E3 ubiquitin ligase mediate 'Lys-63'-linked polyubiquitination of TRAF6, a component of IL17A-mediated signaling pathway. This is Ubiquitin-conjugating enzyme E2 N (UBE2N) from Bos taurus (Bovine).